Consider the following 184-residue polypeptide: Der GTPase-activating protein YihI (184 aa).

The tract at residues 1 to 107 (MNRPVKGAAD…VVAAKPTMSP (107 aa)) is disordered. A compositionally biased stretch (basic and acidic residues) spans 21–32 (TREELEREARER). The span at 80 to 95 (SAVAKPKPKSKPSAPV) shows a compositional bias: low complexity.

Belongs to the YihI family. In terms of assembly, interacts with Der.

In terms of biological role, a GTPase-activating protein (GAP) that modifies Der/EngA GTPase function. May play a role in ribosome biogenesis. This Pectobacterium carotovorum subsp. carotovorum (strain PC1) protein is Der GTPase-activating protein YihI.